The primary structure comprises 194 residues: GTP cyclohydrolase 1 (194 aa).

3 residues coordinate Zn(2+): Cys83, His86, and Cys155.

It belongs to the GTP cyclohydrolase I family. In terms of assembly, toroid-shaped homodecamer, composed of two pentamers of five dimers.

The enzyme catalyses GTP + H2O = 7,8-dihydroneopterin 3'-triphosphate + formate + H(+). Its pathway is cofactor biosynthesis; 7,8-dihydroneopterin triphosphate biosynthesis; 7,8-dihydroneopterin triphosphate from GTP: step 1/1. In Streptococcus pyogenes serotype M5 (strain Manfredo), this protein is GTP cyclohydrolase 1.